The chain runs to 269 residues: Putative pyruvate, phosphate dikinase regulatory protein (269 aa).

147-154 (GLSRTSKT) provides a ligand contact to ADP.

This sequence belongs to the pyruvate, phosphate/water dikinase regulatory protein family. PDRP subfamily.

The catalysed reaction is N(tele)-phospho-L-histidyl/L-threonyl-[pyruvate, phosphate dikinase] + ADP = N(tele)-phospho-L-histidyl/O-phospho-L-threonyl-[pyruvate, phosphate dikinase] + AMP + H(+). The enzyme catalyses N(tele)-phospho-L-histidyl/O-phospho-L-threonyl-[pyruvate, phosphate dikinase] + phosphate + H(+) = N(tele)-phospho-L-histidyl/L-threonyl-[pyruvate, phosphate dikinase] + diphosphate. Bifunctional serine/threonine kinase and phosphorylase involved in the regulation of the pyruvate, phosphate dikinase (PPDK) by catalyzing its phosphorylation/dephosphorylation. The sequence is that of Putative pyruvate, phosphate dikinase regulatory protein from Clostridium botulinum (strain 657 / Type Ba4).